The chain runs to 414 residues: T-box transcription factor TBX3 (414 aa).

Positions 114–287 (LWEQFHKRGT…NNPFAKGFRD (174 aa)) form a DNA-binding region, T-box. Residues 359–414 (XDSXDDXXLEXSEWGKISTTTXTHPWXQPAXGRQRVTTXGTKGAAVPKATSSPXTR) form a disordered region.

Its subcellular location is the nucleus. Its function is as follows. Transcriptional repressor involved in developmental processes. Binds to the palindromic T site 5'-TTCACACCTAGGTGTGAA-3' DNA sequence, or a half-site, which are present in the regulatory region of several genes. Probably plays a role in limb pattern formation. This is T-box transcription factor TBX3 (TBX3) from Gallus gallus (Chicken).